The chain runs to 346 residues: Probable dual-specificity RNA methyltransferase RlmN (346 aa).

The Proton acceptor role is filled by Glu-91. The 229-residue stretch at 97-325 (TEKRLTVCVS…VSVRYSKGLE (229 aa)) folds into the Radical SAM core domain. A disulfide bridge connects residues Cys-104 and Cys-330. [4Fe-4S] cluster contacts are provided by Cys-111, Cys-115, and Cys-118. Residues 158–159 (GE), Ser-188, 211–213 (SLH), and Asn-287 each bind S-adenosyl-L-methionine. Cys-330 serves as the catalytic S-methylcysteine intermediate.

It belongs to the radical SAM superfamily. RlmN family. The cofactor is [4Fe-4S] cluster.

The protein localises to the cytoplasm. It carries out the reaction adenosine(2503) in 23S rRNA + 2 reduced [2Fe-2S]-[ferredoxin] + 2 S-adenosyl-L-methionine = 2-methyladenosine(2503) in 23S rRNA + 5'-deoxyadenosine + L-methionine + 2 oxidized [2Fe-2S]-[ferredoxin] + S-adenosyl-L-homocysteine. It catalyses the reaction adenosine(37) in tRNA + 2 reduced [2Fe-2S]-[ferredoxin] + 2 S-adenosyl-L-methionine = 2-methyladenosine(37) in tRNA + 5'-deoxyadenosine + L-methionine + 2 oxidized [2Fe-2S]-[ferredoxin] + S-adenosyl-L-homocysteine. Functionally, specifically methylates position 2 of adenine 2503 in 23S rRNA and position 2 of adenine 37 in tRNAs. The sequence is that of Probable dual-specificity RNA methyltransferase RlmN from Picosynechococcus sp. (strain ATCC 27264 / PCC 7002 / PR-6) (Agmenellum quadruplicatum).